Here is a 173-residue protein sequence, read N- to C-terminus: Bifunctional protein PyrR (173 aa).

The PRPP-binding motif lies at Val93 to Thr105.

This sequence belongs to the purine/pyrimidine phosphoribosyltransferase family. PyrR subfamily. Homodimer and homohexamer; in equilibrium.

It carries out the reaction UMP + diphosphate = 5-phospho-alpha-D-ribose 1-diphosphate + uracil. Functionally, regulates transcriptional attenuation of the pyrimidine nucleotide (pyr) operon by binding in a uridine-dependent manner to specific sites on pyr mRNA. This disrupts an antiterminator hairpin in the RNA and favors formation of a downstream transcription terminator, leading to a reduced expression of downstream genes. Also displays a weak uracil phosphoribosyltransferase activity which is not physiologically significant. The polypeptide is Bifunctional protein PyrR (Streptococcus uberis (strain ATCC BAA-854 / 0140J)).